Reading from the N-terminus, the 153-residue chain is 3-hydroxyacyl-[acyl-carrier-protein] dehydratase FabZ (153 aa).

Residue histidine 56 is part of the active site.

It belongs to the thioester dehydratase family. FabZ subfamily.

Its subcellular location is the cytoplasm. It catalyses the reaction a (3R)-hydroxyacyl-[ACP] = a (2E)-enoyl-[ACP] + H2O. Functionally, involved in unsaturated fatty acids biosynthesis. Catalyzes the dehydration of short chain beta-hydroxyacyl-ACPs and long chain saturated and unsaturated beta-hydroxyacyl-ACPs. In Halorhodospira halophila (strain DSM 244 / SL1) (Ectothiorhodospira halophila (strain DSM 244 / SL1)), this protein is 3-hydroxyacyl-[acyl-carrier-protein] dehydratase FabZ.